Here is a 77-residue protein sequence, read N- to C-terminus: Acyl carrier protein (77 aa).

The region spanning 1 to 76 (MSLEDDVKAI…DVIKYIQERQ (76 aa)) is the Carrier domain. An O-(pantetheine 4'-phosphoryl)serine modification is found at Ser-36.

The protein belongs to the acyl carrier protein (ACP) family. In terms of processing, 4'-phosphopantetheine is transferred from CoA to a specific serine of apo-ACP by AcpS. This modification is essential for activity because fatty acids are bound in thioester linkage to the sulfhydryl of the prosthetic group.

The protein resides in the cytoplasm. Its pathway is lipid metabolism; fatty acid biosynthesis. Functionally, carrier of the growing fatty acid chain in fatty acid biosynthesis. The polypeptide is Acyl carrier protein (Chlamydia muridarum (strain MoPn / Nigg)).